Here is a 260-residue protein sequence, read N- to C-terminus: Methyl-coenzyme M reductase I subunit gamma (260 aa).

Arg-123 is a coenzyme M binding site.

The protein belongs to the methyl-coenzyme M reductase gamma subunit family. As to quaternary structure, MCR is a hexamer of two alpha, two beta, and two gamma chains, forming a dimer of heterotrimers. It depends on coenzyme F430 as a cofactor.

It is found in the cytoplasm. It catalyses the reaction coenzyme B + methyl-coenzyme M = methane + coenzyme M-coenzyme B heterodisulfide. It functions in the pathway one-carbon metabolism; methyl-coenzyme M reduction; methane from methyl-coenzyme M: step 1/1. Functionally, component of the methyl-coenzyme M reductase (MCR) I that catalyzes the reductive cleavage of methyl-coenzyme M (CoM-S-CH3 or 2-(methylthio)ethanesulfonate) using coenzyme B (CoB or 7-mercaptoheptanoylthreonine phosphate) as reductant which results in the production of methane and the mixed heterodisulfide of CoB and CoM (CoM-S-S-CoB). This is the final step in methanogenesis. The protein is Methyl-coenzyme M reductase I subunit gamma (mcrG) of Methanocaldococcus jannaschii (strain ATCC 43067 / DSM 2661 / JAL-1 / JCM 10045 / NBRC 100440) (Methanococcus jannaschii).